The sequence spans 299 residues: Mycothiol acetyltransferase (299 aa).

N-acetyltransferase domains lie at 1-156 and 149-299; these read MGWT…TYRG and VTMR…ARAL. E33 is a binding site for 1D-myo-inositol 2-(L-cysteinylamino)-2-deoxy-alpha-D-glucopyranoside. Acetyl-CoA is bound by residues 75–77 and 83–88; these read LVV and RRGIGT. Residues E176, K218, and E231 each coordinate 1D-myo-inositol 2-(L-cysteinylamino)-2-deoxy-alpha-D-glucopyranoside. Residues 235–237 and 242–248 each bind acetyl-CoA; these read VGI and QGRGLGR. Position 269 (Y269) interacts with 1D-myo-inositol 2-(L-cysteinylamino)-2-deoxy-alpha-D-glucopyranoside. 274 to 279 is a binding site for acetyl-CoA; sequence NTAALH.

It belongs to the acetyltransferase family. MshD subfamily. As to quaternary structure, monomer.

The enzyme catalyses 1D-myo-inositol 2-(L-cysteinylamino)-2-deoxy-alpha-D-glucopyranoside + acetyl-CoA = mycothiol + CoA + H(+). Catalyzes the transfer of acetyl from acetyl-CoA to desacetylmycothiol (Cys-GlcN-Ins) to form mycothiol. The sequence is that of Mycothiol acetyltransferase from Rhodococcus erythropolis (strain PR4 / NBRC 100887).